Here is a 139-residue protein sequence, read N- to C-terminus: Putative pre-16S rRNA nuclease (139 aa).

This sequence belongs to the YqgF nuclease family.

The protein localises to the cytoplasm. Could be a nuclease involved in processing of the 5'-end of pre-16S rRNA. This Rippkaea orientalis (strain PCC 8801 / RF-1) (Cyanothece sp. (strain PCC 8801)) protein is Putative pre-16S rRNA nuclease.